A 198-amino-acid chain; its full sequence is Large ribosomal subunit protein uL13 (198 aa).

The protein belongs to the universal ribosomal protein uL13 family.

This is Large ribosomal subunit protein uL13 (RPL13A) from Tetrahymena thermophila (strain SB210).